The primary structure comprises 138 residues: RutC family protein UK114 (138 aa).

The protein belongs to the RutC family.

In terms of biological role, molecular chaperone. Seems to fulfill an ATP-independent, HSP70-like function in protein folding. May protect essential factors of cell proliferation during heat shock. No role in calpain activation. This is RutC family protein UK114 from Drosophila melanogaster (Fruit fly).